We begin with the raw amino-acid sequence, 157 residues long: uncharacterized protein (157 aa).

Residues 9–147 (LLINYKTLDE…DFYVWHPEVN (139 aa)) enclose the N-acetyltransferase domain.

This is an uncharacterized protein from Bacillus cereus (strain 03BB102).